Here is a 591-residue protein sequence, read N- to C-terminus: Frizzled-9 (591 aa).

Residues 1 to 22 form the signal peptide; the sequence is MAVAPLRGALLLWQLLAAGGAA. At 23–229 the chain is on the extracellular side; it reads LEIGRFDPER…EVFWSRRDKD (207 aa). Residues 34–155 enclose the FZ domain; the sequence is RGAAPCQAVE…NDPHALCMEA (122 aa). Disulfide bonds link Cys39–Cys100, Cys47–Cys93, Cys84–Cys122, Cys111–Cys152, and Cys115–Cys139. A glycan (N-linked (GlcNAc...) asparagine) is linked at Asn53. A required for Wnt-activated receptor activity region spans residues 58-172; the sequence is PNLLGHTSQG…PAEPHKGLGM (115 aa). Asn158 is a glycosylation site (N-linked (GlcNAc...) asparagine). Residues 230–250 form a helical membrane-spanning segment; it reads FALVWMAVWSALCFFSTAFTV. Topologically, residues 251–266 are cytoplasmic; it reads LTFLLEPHRFQYPERP. The chain crosses the membrane as a helical span at residues 267–287; the sequence is IIFLSMCYNVYSLAFLIRAVA. Residues 288–315 lie on the Extracellular side of the membrane; that stretch reads GAQSVACDQEAGALYVIQEGLENTGCTL. Residues 316 to 336 traverse the membrane as a helical segment; sequence VFLLLYYFGMASSLWWVVLTL. The Cytoplasmic segment spans residues 337–355; it reads TWFLAAGKKWGHEAIEAHG. A helical transmembrane segment spans residues 356 to 376; that stretch reads SYFHMAAWGLPALKTIVILTL. The Extracellular segment spans residues 377–400; that stretch reads RKVAGDELTGLCYVASTDAAALTG. A helical membrane pass occupies residues 401–421; it reads FVLVPLSGYLVLGSSFLLTGF. Residues 422–447 are Cytoplasmic-facing; that stretch reads VALFHIRKIMKTGGTNTEKLEKLMVK. The helical transmembrane segment at 448–468 threads the bilayer; it reads IGVFSILYTVPATCVIVCYVY. Residues 469 to 508 lie on the Extracellular side of the membrane; sequence ERLNMDFWRLRATEQPCAAAAGPGGRRDCSLPGGSVPTVA. A helical transmembrane segment spans residues 509 to 529; it reads VFMLKIFMSLVVGITSGVWVW. Residues 530–591 are Cytoplasmic-facing; that stretch reads SSKTFQTWQS…DPSLENPTHL (62 aa). The Lys-Thr-X-X-X-Trp motif, mediates interaction with the PDZ domain of Dvl family members signature appears at 532–537; the sequence is KTFQTW. The required for CTNNB1 accumulation and TCF transcription factor activity stretch occupies residues 554–591; sequence ACRAPGSYGRGTHCHYKAPTVVLHMTKTDPSLENPTHL.

This sequence belongs to the G-protein coupled receptor Fz/Smo family. Post-translationally, ubiquitinated by ZNRF3, leading to its degradation by the proteasome. Expressed predominantly in adult and fetal brain, testis, eye, skeletal muscle and kidney. Moderately expressed in pancreas, thyroid, adrenal cortex, small intestine and stomach. Detected in fetal liver and kidney. Expressed in neural progenitor cells.

It is found in the cell membrane. Receptor for WNT2 that is coupled to the beta-catenin canonical signaling pathway, which leads to the activation of disheveled proteins, inhibition of GSK-3 kinase, nuclear accumulation of beta-catenin and activation of Wnt target genes. Plays a role in neuromuscular junction (NMJ) assembly by negatively regulating the clustering of acetylcholine receptors (AChR) through the beta-catenin canonical signaling pathway. May play a role in neural progenitor cells (NPCs) viability through the beta-catenin canonical signaling pathway by negatively regulating cell cycle arrest leading to inhibition of neuron apoptotic process. During hippocampal development, regulates neuroblast proliferation and apoptotic cell death. Controls bone formation through non canonical Wnt signaling mediated via ISG15. Positively regulates bone regeneration through non canonical Wnt signaling. In Homo sapiens (Human), this protein is Frizzled-9 (FZD9).